The sequence spans 526 residues: CTP synthase (526 aa).

Positions 1 to 270 are amidoligase domain; the sequence is MKYIFVTGGV…ADVLSTHLGL (270 aa). Ser12 provides a ligand contact to CTP. Residue Ser12 coordinates UTP. ATP is bound by residues 13-18 and Asp70; that span reads GLGKGI. Positions 70 and 145 each coordinate Mg(2+). Residues 152–154, 191–196, and Lys227 contribute to the CTP site; these read DIE and KTKPTQ. Residues 191–196 and Lys227 contribute to the UTP site; that span reads KTKPTQ. Residues 293–525 enclose the Glutamine amidotransferase type-1 domain; it reads VAIVSKYGIE…VEACRANKRT (233 aa). Gly349 serves as a coordination point for L-glutamine. Cys376 (nucleophile; for glutamine hydrolysis) is an active-site residue. L-glutamine-binding positions include 377–380, Glu400, and Arg455; that span reads LGFQ. Residues His498 and Glu500 contribute to the active site.

It belongs to the CTP synthase family. In terms of assembly, homotetramer.

It carries out the reaction UTP + L-glutamine + ATP + H2O = CTP + L-glutamate + ADP + phosphate + 2 H(+). It catalyses the reaction L-glutamine + H2O = L-glutamate + NH4(+). The catalysed reaction is UTP + NH4(+) + ATP = CTP + ADP + phosphate + 2 H(+). It participates in pyrimidine metabolism; CTP biosynthesis via de novo pathway; CTP from UDP: step 2/2. Allosterically activated by GTP, when glutamine is the substrate; GTP has no effect on the reaction when ammonia is the substrate. The allosteric effector GTP functions by stabilizing the protein conformation that binds the tetrahedral intermediate(s) formed during glutamine hydrolysis. Inhibited by the product CTP, via allosteric rather than competitive inhibition. Catalyzes the ATP-dependent amination of UTP to CTP with either L-glutamine or ammonia as the source of nitrogen. Regulates intracellular CTP levels through interactions with the four ribonucleotide triphosphates. In Methanoregula boonei (strain DSM 21154 / JCM 14090 / 6A8), this protein is CTP synthase.